A 102-amino-acid chain; its full sequence is uncharacterized protein (102 aa).

It belongs to the Gram-positive plasmids replication protein type 2 family.

This is an uncharacterized protein from Staphylococcus aureus.